The chain runs to 354 residues: Lysophosphatidic acid receptor 3 (354 aa).

The Extracellular segment spans residues 1–31; it reads MNECHYDKRMDFFYNRSNTDTADEWTGTKLV. A glycan (N-linked (GlcNAc...) asparagine) is linked at asparagine 15. Residues 32 to 52 form a helical membrane-spanning segment; it reads IVLCVGTFFCLFIFFSNSLVI. Over 53–67 the chain is Cytoplasmic; that stretch reads AAVITNRKFHFPFYY. Residues 68–88 form a helical membrane-spanning segment; it reads LLANLAAADFFAGIAYVFLMF. Over 89–101 the chain is Extracellular; it reads NTGPVSKTLTVNR. The chain crosses the membrane as a helical span at residues 102–124; the sequence is WLLRQGLLDTSLTASLANLLVIA. At 125 to 146 the chain is on the cytoplasmic side; sequence VERHMSIMRMRIHSNLTKKRVT. A helical transmembrane segment spans residues 147–167; sequence LLILLVWAIAIFMGAVPTLGW. Over 168–186 the chain is Extracellular; sequence NCLCNISACSSLAPIYSRS. Asparagine 172 is a glycosylation site (N-linked (GlcNAc...) asparagine). Residues 187 to 207 form a helical membrane-spanning segment; sequence YLIFWTVSNLLAFFIMVVVYV. Residues 208–240 are Cytoplasmic-facing; that stretch reads RIYMYVKRKTNVLSPHTSGSISRRRAPMKLMKT. A helical transmembrane segment spans residues 241 to 261; sequence VMTVLGAFVVCWTPGLVVLLL. The Extracellular portion of the chain corresponds to 262 to 276; that stretch reads DGLNCKQCNVQHVKR. A helical membrane pass occupies residues 277–295; the sequence is WFLLLALLNSVMNPIIYSY. Residues 296–354 are Cytoplasmic-facing; sequence KDEDMYNTMRKMICCAPHDSNAERHPSRIPSTIHSRSDTGSQYLEDSISQGQVCNKSSS. Residue cysteine 309 is the site of S-palmitoyl cysteine attachment.

It belongs to the G-protein coupled receptor 1 family.

Its subcellular location is the cell membrane. In terms of biological role, receptor for lysophosphatidic acid (LPA), a mediator of diverse cellular activities. Seems to be coupled to the G(i)/G(o) and G(q) families of heteromeric G proteins. The polypeptide is Lysophosphatidic acid receptor 3 (Lpar3) (Rattus norvegicus (Rat)).